A 493-amino-acid chain; its full sequence is MAVLGITVALLGWMVILLFISVWKQIHSSWNLPPGPFPLPIIGNLLQLDLKDIPKSFGRLAERFGPVFTVYLGSRRVVVLHGYKAVREMLLNHKNEFSGRGEIPAFREFKDKGIIFNNGPTWKDTRRFSLTTLRDYGMGKQGNEDRIQKEAHFLLEELRKTQGQPFDPTFVIGCTPFNVIAKILFNDRFDYKDKQALRLMSLFNENFYLLSTPWLQVYNNFSNYLQYMPGSHRKVIKNVSEIKEYTLARVKEHHKSLDPSCPRDFIDSLLIEMEKDKHSTEPLYTLENIAVTVADMFFAGTETTSTTLRYGLLILLKHPEIEEKLHEEIDRVIGPSRMPSVRDRVQMPYMDAVVHEIQRFIDLVPSNLPHEATRDTTFQGYVIPKGTVVIPTLDSLLYDKQEFPDPEKFKPEHFLNEEGKFKYSDYFKPFSAGKRVCVGEGLARMELFLLLSAILQHFNLKPLVDPEDIDLRNITVGFGRVPPRYKLCVIPRS.

298 to 303 (FAGTET) provides a ligand contact to substrate. C437 serves as a coordination point for heme.

The protein belongs to the cytochrome P450 family. As to quaternary structure, interacts with chaperones HSP70 and HSP90; this interaction is required for initial targeting to mitochondria. It depends on heme as a cofactor.

It localises to the endoplasmic reticulum membrane. Its subcellular location is the microsome membrane. The protein resides in the mitochondrion inner membrane. It catalyses the reaction an organic molecule + reduced [NADPH--hemoprotein reductase] + O2 = an alcohol + oxidized [NADPH--hemoprotein reductase] + H2O + H(+). The enzyme catalyses (5Z,8Z,11Z)-eicosatrienoate + reduced [NADPH--hemoprotein reductase] + O2 = 19-hydroxy-(5Z,8Z,11Z)-eicosatrienoate + oxidized [NADPH--hemoprotein reductase] + H2O + H(+). The catalysed reaction is (5Z,8Z,11Z,14Z,17Z)-eicosapentaenoate + reduced [NADPH--hemoprotein reductase] + O2 = 19-hydroxy-(5Z,8Z,11Z,14Z,17Z)-eicosapentaenoate + oxidized [NADPH--hemoprotein reductase] + H2O + H(+). It carries out the reaction (4Z,7Z,10Z,13Z,16Z,19Z)-docosahexaenoate + reduced [NADPH--hemoprotein reductase] + O2 = 21-hydroxy-(4Z,7Z,10Z,13Z,16Z,19Z)-docosahexaenoate + oxidized [NADPH--hemoprotein reductase] + H2O + H(+). It catalyses the reaction dodecanoate + reduced [NADPH--hemoprotein reductase] + O2 = 11-hydroxydodecanoate + oxidized [NADPH--hemoprotein reductase] + H2O + H(+). The enzyme catalyses tetradecanoate + reduced [NADPH--hemoprotein reductase] + O2 = 13-hydroxytetradecanoate + oxidized [NADPH--hemoprotein reductase] + H2O + H(+). The catalysed reaction is 4-nitrophenol + NADPH + O2 + H(+) = 4-nitrocatechol + NADP(+) + H2O. It functions in the pathway lipid metabolism; fatty acid metabolism. The omega-1 hydroxylase activity is stimulated by cytochrome b5. A cytochrome P450 monooxygenase involved in the metabolism of fatty acids. Mechanistically, uses molecular oxygen inserting one oxygen atom into a substrate, and reducing the second into a water molecule, with two electrons provided by NADPH via cytochrome P450 reductase (NADPH--hemoprotein reductase). Catalyzes the hydroxylation of carbon-hydrogen bonds. Hydroxylates fatty acids specifically at the omega-1 position displaying the highest catalytic activity for saturated fatty acids. May be involved in the oxidative metabolism of xenobiotics. The polypeptide is Cytochrome P450 2E1 (CYP2E1) (Oryctolagus cuniculus (Rabbit)).